A 597-amino-acid polypeptide reads, in one-letter code: Arginine--tRNA ligase (597 aa).

Residues 138–148 (ANPTGPMHVGH) carry the 'HIGH' region motif.

The protein belongs to the class-I aminoacyl-tRNA synthetase family. In terms of assembly, monomer.

The protein resides in the cytoplasm. The enzyme catalyses tRNA(Arg) + L-arginine + ATP = L-arginyl-tRNA(Arg) + AMP + diphosphate. The sequence is that of Arginine--tRNA ligase from Nitrobacter winogradskyi (strain ATCC 25391 / DSM 10237 / CIP 104748 / NCIMB 11846 / Nb-255).